The primary structure comprises 414 residues: Translation initiation factor 2 subunit gamma (414 aa).

The tr-type G domain maps to 7-204 (QPEVNIGLVG…ALQTEIATPD (198 aa)). Positions 16–23 (GHVDHGKT) are G1. Asp-19, Thr-23, Gly-44, and Ser-46 together coordinate Mg(2+). 19–24 (DHGKTT) contacts GTP. The G2 stretch occupies residues 44-48 (GISIR). A G3 region spans residues 91 to 94 (DAPG). GTP contacts are provided by residues 147 to 150 (NKVD) and 182 to 184 (SAE). Residues 147–150 (NKVD) are G4. A G5 region spans residues 182–184 (SAE).

It belongs to the TRAFAC class translation factor GTPase superfamily. Classic translation factor GTPase family. EIF2G subfamily. Heterotrimer composed of an alpha, a beta and a gamma chain. Mg(2+) is required as a cofactor.

The catalysed reaction is GTP + H2O = GDP + phosphate + H(+). Functionally, eIF-2 functions in the early steps of protein synthesis by forming a ternary complex with GTP and initiator tRNA. This Halobacterium salinarum (strain ATCC 29341 / DSM 671 / R1) protein is Translation initiation factor 2 subunit gamma.